A 194-amino-acid polypeptide reads, in one-letter code: Erythropoietin (194 aa).

The N-terminal stretch at 1–26 is a signal peptide; sequence MGARECPARLLLLSLLLLPLGLPVLG. Cystine bridges form between C33–C189 and C55–C59. N50 carries an N-linked (GlcNAc...) asparagine glycan. N-linked (GlcNAc...) asparagine glycans are attached at residues N64, N109, and N172.

It belongs to the EPO/TPO family. In terms of tissue distribution, produced by kidney or liver of adult mammals and by liver of fetal or neonatal mammals.

The protein resides in the secreted. Functionally, hormone involved in the regulation of erythrocyte proliferation and differentiation and the maintenance of a physiological level of circulating erythrocyte mass. Binds to EPOR leading to EPOR dimerization and JAK2 activation thereby activating specific downstream effectors, including STAT1 and STAT3. This chain is Erythropoietin (EPO), found in Sus scrofa (Pig).